Reading from the N-terminus, the 455-residue chain is Folate transporter 2 (455 aa).

The next 8 helical transmembrane spans lie at 42–64 (IVVYLVGLSDGLTHLASLAIYYL), 84–103 (YIPFILKPVIALITDSFSIF), 110–131 (YLFLFSLFQSLNFLALAFLNLS), 137–157 (LILFFISLCASFCTTVAEALV), 177–195 (IASKAIGSLSVAYFSGYFL), 201–221 (EYIFIATSIFPLIISLSCLFL), 242–261 (FINTPIFLGPFLYIFVYMSG), and 281–301 (SFMGTLRLTYGIASLIGIIIY). An N-linked (GlcNAc...) asparagine glycan is attached at N307. The next 2 helical transmembrane spans lie at 313–331 (TLIITTLVSFPIYISPIIL) and 347–367 (VLSGGFLIEAITEIQLLPLFI). The N-linked (GlcNAc...) asparagine glycan is linked to N416. A helical transmembrane segment spans residues 417 to 438 (LSLYILTCGFFLLFSLTLVPLL).

The protein belongs to the major facilitator superfamily. Folate-biopterin transporter (TC 2.A.71) family.

The protein resides in the cell membrane. It catalyses the reaction folate(in) + H(+)(in) = folate(out) + H(+)(out). The catalysed reaction is (6S)-5-methyl-5,6,7,8-tetrahydrofolate(in) + H(+)(in) = (6S)-5-methyl-5,6,7,8-tetrahydrofolate(out) + H(+)(out). Its activity is regulated as follows. Transport of folates is inhibited by probenecid and methotrexate. Folate transporter with broad substrate specificity. Transports folic acid, folinic acid, pteroic acid, dihydropteroic acid, the folate precursor p-amino benzoic acid (pABA) and the human folate catabolite pABA monoglutamate. Can transport 5-methyltetrahydrofolate with low efficiency. The chain is Folate transporter 2 from Plasmodium falciparum (isolate 3D7).